Here is a 384-residue protein sequence, read N- to C-terminus: N-acetylneuraminate epimerase (384 aa).

A signal peptide spans 1 to 29; that stretch reads MGMQMKNFKKMMTLMALCLSVAITTSGYA. 7 Kelch repeats span residues 51–95, 97–149, 151–184, 185–230, 233–282, 304–353, and 355–384; these read VIYV…VFLN, ELYV…VKLN, TMVL…KVIY, NYFN…VMEN, LMLI…LAGA, QNYT…SYGD, and VFLI…LLIK. Glu239 acts as the Proton acceptor in catalysis.

It belongs to the NanM family. As to quaternary structure, homodimer.

The protein localises to the periplasm. It catalyses the reaction N-acetyl-alpha-neuraminate = N-acetyl-beta-neuraminate. Its function is as follows. Converts alpha-N-acetylneuranimic acid (Neu5Ac) to the beta-anomer, accelerating the equilibrium between the alpha- and beta-anomers. Probably facilitates sialidase-negative bacteria to compete successfully for limited amounts of extracellular Neu5Ac, which is likely taken up in the beta-anomer. In addition, the rapid removal of sialic acid from solution might be advantageous to the bacterium to damp down host responses. In Salmonella enteritidis PT4 (strain P125109), this protein is N-acetylneuraminate epimerase.